We begin with the raw amino-acid sequence, 377 residues long: Succinyl-diaminopimelate desuccinylase (377 aa).

His68 is a binding site for Zn(2+). Asp70 is an active-site residue. Asp101 lines the Zn(2+) pocket. Glu135 acts as the Proton acceptor in catalysis. Zn(2+) is bound by residues Glu136, Glu164, and His350.

Belongs to the peptidase M20A family. DapE subfamily. As to quaternary structure, homodimer. Zn(2+) serves as cofactor. Co(2+) is required as a cofactor.

The catalysed reaction is N-succinyl-(2S,6S)-2,6-diaminopimelate + H2O = (2S,6S)-2,6-diaminopimelate + succinate. It functions in the pathway amino-acid biosynthesis; L-lysine biosynthesis via DAP pathway; LL-2,6-diaminopimelate from (S)-tetrahydrodipicolinate (succinylase route): step 3/3. Its function is as follows. Catalyzes the hydrolysis of N-succinyl-L,L-diaminopimelic acid (SDAP), forming succinate and LL-2,6-diaminopimelate (DAP), an intermediate involved in the bacterial biosynthesis of lysine and meso-diaminopimelic acid, an essential component of bacterial cell walls. In Acinetobacter baylyi (strain ATCC 33305 / BD413 / ADP1), this protein is Succinyl-diaminopimelate desuccinylase.